A 636-amino-acid chain; its full sequence is MINITLPDGKIVESDGPVSGEDVAKGISEGFARNCVAVEVDGKLTDLSTPIETDASVVFITTKDEQGLDIMRHSAAHVMAEAILNLYPDAKLTIGPVIEDGFYYDIDMPPISEDDFPKIEQEINKIIKAKKPFVRKTLSKAEALDFYKDNAFKTELISELEDGTISIYEQGGFTDLCRGPHVPNTGLVKTLKLMKVSGAYWRGDSERPMLQRLYGTAFFDKKELKSYLHLLEEAKKRDHRKLGTALDLFSFHEEAAGMPFFHARGMELWNALLAYWREEHKKAGYVETKTPIMLNKSLWERSGHWENYRENMYTSLIEDFDYAIKPMNCPGGMLLYKTKHHSYNDLPIRAGEIGLVHRHELSGVLSGLFRVRAFHQDDAHIFMTEEMIEDEILGVLQLVERMYSTFGLGFHLELSTRPEKTIGTDEQWEKATEGLRAALDKSGRDYKINEGDGAFYGPKIDIHIKDALGRTWQCGTIQLDMNLPERFDLTYVGADNQRHRPVMIHRVIYGSIERFLGILIEHYAGKFPLWLSPCQAVVLAMNDDVAGYAKEVKARLEEAGLRMEIDLRAESINKKVRDAQLSKIPLMLTVGGKEEAAQTLAVRTLDGKVKYGVTIDNFLDKVLPHIETRNPDLVEF.

Positions 1–61 constitute a TGS domain; the sequence is MINITLPDGK…ETDASVVFIT (61 aa). Residues 238–528 are catalytic; sequence DHRKLGTALD…LIEHYAGKFP (291 aa). Cys329, His380, and His505 together coordinate Zn(2+).

It belongs to the class-II aminoacyl-tRNA synthetase family. Homodimer. The cofactor is Zn(2+).

Its subcellular location is the cytoplasm. It carries out the reaction tRNA(Thr) + L-threonine + ATP = L-threonyl-tRNA(Thr) + AMP + diphosphate + H(+). In terms of biological role, catalyzes the attachment of threonine to tRNA(Thr) in a two-step reaction: L-threonine is first activated by ATP to form Thr-AMP and then transferred to the acceptor end of tRNA(Thr). Also edits incorrectly charged L-seryl-tRNA(Thr). In Desulfatibacillum aliphaticivorans, this protein is Threonine--tRNA ligase.